The sequence spans 125 residues: Large ribosomal subunit protein bL12 (125 aa).

Belongs to the bacterial ribosomal protein bL12 family. Homodimer. Part of the ribosomal stalk of the 50S ribosomal subunit. Forms a multimeric L10(L12)X complex, where L10 forms an elongated spine to which 2 to 4 L12 dimers bind in a sequential fashion. Binds GTP-bound translation factors.

Its function is as follows. Forms part of the ribosomal stalk which helps the ribosome interact with GTP-bound translation factors. Is thus essential for accurate translation. This chain is Large ribosomal subunit protein bL12, found in Rickettsia canadensis (strain McKiel).